Here is a 270-residue protein sequence, read N- to C-terminus: Probable aquaporin NIP-type (270 aa).

The next 2 membrane-spanning stretches (helical) occupy residues 45 to 65 (LIAE…SVAV) and 72 to 92 (VTFP…VYTV). The NPA 1 motif lies at 101-103 (NPA). Helical transmembrane passes span 121–141 (LYII…ALLF), 160–180 (SLAI…GVAT), and 188–208 (VAGI…GPIS). Positions 213–215 (NPA) match the NPA 2 motif. The chain crosses the membrane as a helical span at residues 231–251 (WVYVVGPIIGTLAGAFVYNLI).

Belongs to the MIP/aquaporin (TC 1.A.8) family. NIP (TC 1.A.8.12) subfamily. In terms of tissue distribution, pollen specific.

It localises to the membrane. Aquaporins facilitate the transport of water and small neutral solutes across cell membranes. In Nicotiana alata (Winged tobacco), this protein is Probable aquaporin NIP-type.